The sequence spans 426 residues: Selenate reductase subunit C (426 aa).

10 consecutive transmembrane segments (helical) span residues L5 to L25, W40 to L60, L78 to L98, W119 to M139, I187 to F207, I223 to F243, L261 to L281, F302 to I322, M330 to I350, and V385 to F405.

The protein belongs to the NrfD family. In terms of assembly, the complex is composed of three subunits: SrdA, SrdB and SrdC.

It is found in the cell membrane. The enzyme catalyses selenite + a quinone + H2O = selenate + a quinol. Its function is as follows. Component of the respiratory selenate reductase complex, which catalyzes the reduction of selenate to selenite. This subunit probably receives electrons directly from the membrane quinone pool and transfers the electrons to the iron-sulfur clusters of SrdB. May be the membrane anchor protein subunit of the complex. In Mesobacillus selenatarsenatis (strain DSM 18680 / JCM 14380 / FERM P-15431 / SF-1), this protein is Selenate reductase subunit C.